Here is a 266-residue protein sequence, read N- to C-terminus: Thiazole synthase (266 aa).

K106 serves as the catalytic Schiff-base intermediate with DXP. Residues G167, 193-194, and 215-216 contribute to the 1-deoxy-D-xylulose 5-phosphate site; these read AG and NT.

This sequence belongs to the ThiG family. In terms of assembly, homotetramer. Forms heterodimers with either ThiH or ThiS.

The protein localises to the plastid. Its subcellular location is the chloroplast. The catalysed reaction is [ThiS sulfur-carrier protein]-C-terminal-Gly-aminoethanethioate + 2-iminoacetate + 1-deoxy-D-xylulose 5-phosphate = [ThiS sulfur-carrier protein]-C-terminal Gly-Gly + 2-[(2R,5Z)-2-carboxy-4-methylthiazol-5(2H)-ylidene]ethyl phosphate + 2 H2O + H(+). Its pathway is cofactor biosynthesis; thiamine diphosphate biosynthesis. In terms of biological role, catalyzes the rearrangement of 1-deoxy-D-xylulose 5-phosphate (DXP) to produce the thiazole phosphate moiety of thiamine. Sulfur is provided by the thiocarboxylate moiety of the carrier protein ThiS. In vitro, sulfur can be provided by H(2)S. This Cyanidium caldarium (Red alga) protein is Thiazole synthase.